The primary structure comprises 287 residues: Phosphoribosylaminoimidazole-succinocarboxamide synthase (287 aa).

This sequence belongs to the SAICAR synthetase family.

It catalyses the reaction 5-amino-1-(5-phospho-D-ribosyl)imidazole-4-carboxylate + L-aspartate + ATP = (2S)-2-[5-amino-1-(5-phospho-beta-D-ribosyl)imidazole-4-carboxamido]succinate + ADP + phosphate + 2 H(+). It functions in the pathway purine metabolism; IMP biosynthesis via de novo pathway; 5-amino-1-(5-phospho-D-ribosyl)imidazole-4-carboxamide from 5-amino-1-(5-phospho-D-ribosyl)imidazole-4-carboxylate: step 1/2. The protein is Phosphoribosylaminoimidazole-succinocarboxamide synthase of Neisseria meningitidis serogroup A / serotype 4A (strain DSM 15465 / Z2491).